The chain runs to 1312 residues: Kinesin-like protein KIF16B (1312 aa).

Residues 3–358 enclose the Kinesin motor domain; it reads SVKVAVRVRP…LRYANRAKNI (356 aa). 102–109 is a binding site for ATP; that stretch reads GQTGSGKS. The stretch at 366 to 425 forms a coiled coil; it reads EDANVKLIRELRAEIARLKTLLAQGNQIALLDSPTALSMEEKLHQNEARVQELTKEWTNK. Phosphoserine is present on serine 398. Residues 480–544 form the FHA domain; sequence VGREDASTEQ…LNQGAVILLG (65 aa). Residue threonine 577 is modified to Phosphothreonine. Residues serine 582, serine 838, serine 1047, and serine 1145 each carry the phosphoserine modification. Coiled coils occupy residues 835-913 and 941-1073; these read KLAS…LQNH and QVEK…KQKI. The PX domain maps to 1177–1291; the sequence is DPIKISIPRY…KVGLTLSKHT (115 aa).

The protein belongs to the TRAFAC class myosin-kinesin ATPase superfamily. Kinesin family. In terms of assembly, interacts with PTPN21. Interacts with RAB14.

The protein resides in the cytoplasm. It localises to the cytoskeleton. It is found in the early endosome membrane. The protein localises to the spindle. Its function is as follows. Plus end-directed microtubule-dependent motor protein involved in endosome transport and receptor recycling and degradation. Regulates the plus end motility of early endosomes and the balance between recycling and degradation of receptors such as EGF receptor (EGFR) and FGF receptor (FGFR). Regulates the Golgi to endosome transport of FGFR-containing vesicles during early development, a key process for developing basement membrane and epiblast and primitive endoderm lineages during early postimplantation development. This Mus musculus (Mouse) protein is Kinesin-like protein KIF16B (Kif16b).